Reading from the N-terminus, the 253-residue chain is MLTKRIIPCLDVKEGRVVKGIQFVSIRDAGDPVELAKFYDEQGADELVFLDISASHEGRETMIEVVQQTAATLAIPFTVGGGIRTLDDMKRILRAGADKVSVNTSALERPSLIQEGSDFFGAQCIVVAIDARYSEEDGTWMVYTHGGRNKTTWSAIDWAKEAVRLGAGEILLTSMNQDGEKSGFDLGLTKAVREAVSVPVIASGGAGYAEHFYEVLAEEVDADAALAASIFHYKETSVAQVKEYLRAKGVAVR.

Catalysis depends on residues Asp11 and Asp130.

This sequence belongs to the HisA/HisF family. Heterodimer of HisH and HisF.

Its subcellular location is the cytoplasm. The catalysed reaction is 5-[(5-phospho-1-deoxy-D-ribulos-1-ylimino)methylamino]-1-(5-phospho-beta-D-ribosyl)imidazole-4-carboxamide + L-glutamine = D-erythro-1-(imidazol-4-yl)glycerol 3-phosphate + 5-amino-1-(5-phospho-beta-D-ribosyl)imidazole-4-carboxamide + L-glutamate + H(+). It participates in amino-acid biosynthesis; L-histidine biosynthesis; L-histidine from 5-phospho-alpha-D-ribose 1-diphosphate: step 5/9. IGPS catalyzes the conversion of PRFAR and glutamine to IGP, AICAR and glutamate. The HisF subunit catalyzes the cyclization activity that produces IGP and AICAR from PRFAR using the ammonia provided by the HisH subunit. This Lysinibacillus sphaericus (strain C3-41) protein is Imidazole glycerol phosphate synthase subunit HisF.